The primary structure comprises 228 residues: Aquaporin Z 2 (228 aa).

The next 2 helical transmembrane spans lie at 9 to 29 (FFGT…AAAF) and 34 to 54 (IGFT…AYAV). The NPA 1 signature appears at 63-65 (NPA). 3 helical membrane passes run 82-102 (VPYV…LYVI), 129-149 (LVSA…VILG), and 158-178 (GFAP…SIPV). Residues 184 to 186 (NPA) carry the NPA 2 motif. Residues 204–224 (WLFWLAPIVGGAAGAVIWKLF) traverse the membrane as a helical segment.

The protein belongs to the MIP/aquaporin (TC 1.A.8) family. In terms of assembly, homotetramer.

Its subcellular location is the cell inner membrane. It catalyses the reaction H2O(in) = H2O(out). Its function is as follows. Channel that permits osmotically driven movement of water in both directions. It is involved in the osmoregulation and in the maintenance of cell turgor during volume expansion in rapidly growing cells. It mediates rapid entry or exit of water in response to abrupt changes in osmolarity. This Agrobacterium fabrum (strain C58 / ATCC 33970) (Agrobacterium tumefaciens (strain C58)) protein is Aquaporin Z 2.